The sequence spans 124 residues: Large-conductance mechanosensitive channel (124 aa).

2 consecutive transmembrane segments (helical) span residues 15-35 (MDLA…NSLV) and 67-87 (GSFL…FFLI).

Belongs to the MscL family. Homopentamer.

Its subcellular location is the cell membrane. Its function is as follows. Channel that opens in response to stretch forces in the membrane lipid bilayer. May participate in the regulation of osmotic pressure changes within the cell. The polypeptide is Large-conductance mechanosensitive channel (Lactobacillus johnsonii (strain CNCM I-12250 / La1 / NCC 533)).